The chain runs to 199 residues: Securin (199 aa).

Disordered stretches follow at residues 1–23 (MATLIFVDKDNEEPGSRLASKDG) and 58–108 (RKAL…DDAY). Alanine 2 carries the post-translational modification N-acetylalanine. Positions 7 to 23 (VDKDNEEPGSRLASKDG) are enriched in basic and acidic residues. The D-box signature appears at 58–61 (RKAL). Residues 68–70 (TEK) carry the TEK-box 1 motif. Over residues 76–85 (KPLQSKQPTL) the composition is skewed to polar residues. Positions 91–93 (TEK) match the TEK-box 2 motif. Serine 162 is modified (phosphoserine). The SH3-binding signature appears at 179 to 192 (PPSALSALDVELPP).

The protein belongs to the securin family. As to quaternary structure, interacts with the caspase-like ESPL1, and prevents its protease activity by covering its active site. Interacts with p53/TP53 and blocks its activity probably by blocking its binding to DNA. Interacts with the Ku 70 kDa subunit of ds-DNA kinase. Interacts with PTTG1IP. Interacts with RPS10 and DNAJA1. Post-translationally, phosphorylated at Ser-162 by CDK1 during mitosis. Phosphorylated in vitro by ds-DNA kinase. In terms of processing, ubiquitinated through 'Lys-11' linkage of ubiquitin moieties by the anaphase promoting complex (APC) at the onset of anaphase, conducting to its degradation. 'Lys-11'-linked ubiquitination is mediated by the E2 ligase UBE2C/UBCH10. In terms of tissue distribution, expressed at low level in most tissues, except in adult testis, where it is highly expressed. Expressed in both spermatocytes and spermatids.

It is found in the cytoplasm. It localises to the nucleus. In terms of biological role, regulatory protein, which plays a central role in chromosome stability, in the p53/TP53 pathway, and DNA repair. Probably acts by blocking the action of key proteins. During the mitosis, it blocks Separase/ESPL1 function, preventing the proteolysis of the cohesin complex and the subsequent segregation of the chromosomes. At the onset of anaphase, it is ubiquitinated, conducting to its destruction and to the liberation of ESPL1. Its function is however not limited to a blocking activity, since it is required to activate ESPL1. Negatively regulates the transcriptional activity and related apoptosis activity of p53/TP53. The negative regulation of p53/TP53 may explain the strong transforming capability of the protein when it is overexpressed. May also play a role in DNA repair via its interaction with Ku, possibly by connecting DNA damage-response pathways with sister chromatid separation. This is Securin (Pttg1) from Rattus norvegicus (Rat).